A 328-amino-acid polypeptide reads, in one-letter code: Ribosomal protein L11 methyltransferase (328 aa).

Residues threonine 158, glycine 180, aspartate 202, and asparagine 246 each contribute to the S-adenosyl-L-methionine site.

It belongs to the methyltransferase superfamily. PrmA family.

The protein localises to the cytoplasm. The catalysed reaction is L-lysyl-[protein] + 3 S-adenosyl-L-methionine = N(6),N(6),N(6)-trimethyl-L-lysyl-[protein] + 3 S-adenosyl-L-homocysteine + 3 H(+). Functionally, methylates ribosomal protein L11. This is Ribosomal protein L11 methyltransferase from Polynucleobacter necessarius subsp. necessarius (strain STIR1).